Reading from the N-terminus, the 207-residue chain is Outer-membrane lipoprotein LolB (207 aa).

The signal sequence occupies residues 1-21 (MPMRKRHFYRLLPLASLLLAA). A lipid anchor (N-palmitoyl cysteine) is attached at C22. C22 carries the S-diacylglycerol cysteine lipid modification.

It belongs to the LolB family. As to quaternary structure, monomer.

It is found in the cell outer membrane. Its function is as follows. Plays a critical role in the incorporation of lipoproteins in the outer membrane after they are released by the LolA protein. The chain is Outer-membrane lipoprotein LolB from Yersinia pseudotuberculosis serotype O:3 (strain YPIII).